Consider the following 122-residue polypeptide: Large ribosomal subunit protein uL14 (122 aa).

The protein belongs to the universal ribosomal protein uL14 family. In terms of assembly, part of the 50S ribosomal subunit. Forms a cluster with proteins L3 and L19. In the 70S ribosome, L14 and L19 interact and together make contacts with the 16S rRNA in bridges B5 and B8.

In terms of biological role, binds to 23S rRNA. Forms part of two intersubunit bridges in the 70S ribosome. This chain is Large ribosomal subunit protein uL14, found in Neisseria meningitidis serogroup C (strain 053442).